Reading from the N-terminus, the 145-residue chain is Transcriptional anti-antiactivator ExsC (145 aa).

In terms of assembly, homodimer. Interacts with ExsE. Interacts directly with ExsD to form a heterotetrameric complex.

The protein localises to the cytoplasm. With respect to regulation, in the absence of inducing signals, ExsE interacts with and inhibits ExsC activity. Functionally, part of the regulatory cascade that plays a role in the transcriptional regulation of the type III secretion system (T3SS). Interacts with antiactivator ExsD to inhibit its activity leading to ExsA-mediated transcription. This chain is Transcriptional anti-antiactivator ExsC (exsC), found in Pseudomonas aeruginosa (strain ATCC 15692 / DSM 22644 / CIP 104116 / JCM 14847 / LMG 12228 / 1C / PRS 101 / PAO1).